Reading from the N-terminus, the 352-residue chain is Sulfate-binding protein (352 aa).

An N-terminal signal peptide occupies residues 1-40; it reads MARSAFGWGFSVIAVLMVGSITACNTTTTTEPGQGENASQ.

This sequence belongs to the prokaryotic sulfate-binding protein family.

Its subcellular location is the periplasm. In terms of biological role, this protein specifically binds sulfate and is involved in its transmembrane transport. This Synechocystis sp. (strain ATCC 27184 / PCC 6803 / Kazusa) protein is Sulfate-binding protein (sbpA).